Here is a 345-residue protein sequence, read N- to C-terminus: Ribosomal RNA large subunit methyltransferase F (345 aa).

Polar residues predominate over residues 1 to 14 (MTSKPMTRRPTANN). Disordered regions lie at residues 1 to 35 (MTSK…RNPH) and 225 to 258 (EANS…NAAQ). Over residues 229–239 (RKQHNLQRHRG) the composition is skewed to basic residues. Over residues 246-258 (ISRSSTKSGNAAQ) the composition is skewed to polar residues.

The protein belongs to the methyltransferase superfamily. METTL16/RlmF family.

The protein resides in the cytoplasm. The enzyme catalyses adenosine(1618) in 23S rRNA + S-adenosyl-L-methionine = N(6)-methyladenosine(1618) in 23S rRNA + S-adenosyl-L-homocysteine + H(+). In terms of biological role, specifically methylates the adenine in position 1618 of 23S rRNA. The polypeptide is Ribosomal RNA large subunit methyltransferase F (Psychrobacter arcticus (strain DSM 17307 / VKM B-2377 / 273-4)).